A 536-amino-acid polypeptide reads, in one-letter code: Chaperonin GroEL 2 (536 aa).

ATP-binding positions include 29 to 32 (TLGP), 86 to 90 (DGTTT), G413, 476 to 478 (NAA), and D492.

This sequence belongs to the chaperonin (HSP60) family. Forms a cylinder of 14 subunits composed of two heptameric rings stacked back-to-back. Interacts with the co-chaperonin GroES.

It is found in the cytoplasm. The enzyme catalyses ATP + H2O + a folded polypeptide = ADP + phosphate + an unfolded polypeptide.. Its function is as follows. Together with its co-chaperonin GroES, plays an essential role in assisting protein folding. The GroEL-GroES system forms a nano-cage that allows encapsulation of the non-native substrate proteins and provides a physical environment optimized to promote and accelerate protein folding. This is Chaperonin GroEL 2 from Moorella thermoacetica (strain ATCC 39073 / JCM 9320).